We begin with the raw amino-acid sequence, 89 residues long: UPF0335 protein OCAR_5086/OCA5_c28780 (89 aa).

Belongs to the UPF0335 family.

In Afipia carboxidovorans (strain ATCC 49405 / DSM 1227 / KCTC 32145 / OM5) (Oligotropha carboxidovorans), this protein is UPF0335 protein OCAR_5086/OCA5_c28780.